A 315-amino-acid chain; its full sequence is MQCNDVQATEPDIKVSLTRVGVTNLKKLVKLKRTNKRDIVLLPTFEVFVDLPSSQKGIHMSRSPEVIEEVVENILLEKEIYGVEDLSVEIVMKLFEKHEYATRAEIMLYSDYMMEEKSPVTQKDSQEIGKIIARAYGVKDENGKIHVKKMVGAEVVGITACPCAQNMLKENAVTSLKEKGFSNEEIEKILDSVTIATHNQRGIGTVMIEVPNGYTVGISKIIKIIKDSMSGEVYELLKRSDEAFVVETAHKNPKFVEDCAREMIKRVVDVFDYLPEDTQVLVRQVNKESIHRHDAFAERNSTLRELRDELKTLTN.

It belongs to the GTP cyclohydrolase IV family. As to quaternary structure, homodimer. Fe(2+) is required as a cofactor.

It catalyses the reaction GTP + H2O = 7,8-dihydroneopterin 2',3'-cyclic phosphate + formate + diphosphate + H(+). It participates in cofactor biosynthesis; 5,6,7,8-tetrahydromethanopterin biosynthesis. Converts GTP to 7,8-dihydro-D-neopterin 2',3'-cyclic phosphate, the first intermediate in the biosynthesis of coenzyme methanopterin. This chain is GTP cyclohydrolase MptA, found in Methanococcus maripaludis (strain C6 / ATCC BAA-1332).